Reading from the N-terminus, the 2522-residue chain is Unconventional myosin-IXAa (2522 aa).

The Ras-associating domain occupies 15-113 (SELTLRIYPG…YRFLLREKNL (99 aa)). The region spanning 147–1007 (KDFDDLCNLP…ERQRLQDLLH (861 aa)) is the Myosin motor domain. A helical membrane pass occupies residues 176-196 (IYTYVGSILIVINPFKFLPIY). 240-247 (GESGSGKT) is an ATP binding site. The disordered stretch occupies residues 767–802 (VNRRNPRTPLSDLQGSNAINQREGWNGRPGRQNRLS). The segment covering 777–786 (SDLQGSNAIN) has biased composition (polar residues). Residues 888–910 (LNKLMETLGQSQPYFVKCIRSNS) are actin-binding. 4 consecutive IQ domains span residues 1012 to 1039 (SRIVYLQRRFRALLERKNFLRVRQAACQ), 1063 to 1092 (QEGAVVCIQSAWRGFRERRRLLLWREASVL), 1102 to 1131 (QRRAALQIQTAWRRHRARELFLRQRDATIR), and 1125 to 1154 (QRDATIRLQAVGRGYLARQRFRELQKQRLK). The interval 1012 to 1149 (SRIVYLQRRF…LARQRFRELQ (138 aa)) is neck or regulatory domain. The interval 1150-2497 (KQRLKITHLP…LQGAKSSPQR (1348 aa)) is tail. Disordered stretches follow at residues 1218–1254 (GMAPAQPSPEVTIRERPRTLEDPNQRTRAKRESRRMR), 1318–1409 (DKAP…STRR), 1424–1612 (NEAD…GNIF), 1630–1754 (NQEK…GRVR), 1799–1827 (RLSPPHSPDLTLQREFKENKEPSPKVKRR), and 1962–1983 (LDSSLGKAPKPDRKKRRKKDTD). Basic and acidic residues predominate over residues 1229 to 1242 (TIRERPRTLEDPNQ). 2 stretches are compositionally biased toward polar residues: residues 1330–1349 (SPSSVPDQHNVLPSDTSTPD) and 1366–1390 (SLPTFYTPPSESSSLVIKSTTNSVT). Composition is skewed to basic and acidic residues over residues 1399-1408 (PSKDKKESTR) and 1426-1435 (ADVKPLEVKD). A compositionally biased stretch (polar residues) spans 1437-1454 (AAQTSEPPSPAQPSTDSS). Positions 1456-1525 (VLEKLEKLNE…LRRIEQSRQE (70 aa)) form a coiled coil. Composition is skewed to basic and acidic residues over residues 1458–1484 (EKLEKLNEEKEERQKHQRQQNEKEMME), 1492–1523 (ILEEQRRNLVQNEREKLEKQRAETLRRIEQSR), 1549–1566 (PAREKDGAPLILRDRPKD), and 1580–1589 (LESRGDEARS). Composition is skewed to polar residues over residues 1594–1604 (KPSNQNVNISM) and 1631–1641 (QEKTPGAQNEV). The span at 1656–1665 (PGHKKARMAR) shows a compositional bias: basic residues. Residues 1681-1690 (GESEEEEYDE) are compositionally biased toward acidic residues. Basic and acidic residues-rich tracts occupy residues 1738 to 1753 (LGKHDTRKNSHGDGRV) and 1810 to 1822 (LQREFKENKEPSP). The segment at 1990-2039 (GHIFKSTQYSIPTYCEYCSSLIWMMDKACVCKLCRYACHRKCCQKMTTKC) adopts a Phorbol-ester/DAG-type zinc-finger fold. The region spanning 2054–2242 (VELSRLTNDE…LIICEQMNKY (189 aa)) is the Rho-GAP domain. Disordered regions lie at residues 2274 to 2325 (PVHR…QEEK) and 2348 to 2522 (LEPR…EFMV). Positions 2317–2344 (QVAMQQEEKVLTEQIESLQKEKEELTFE) form a coiled coil. Positions 2366–2383 (TADSSENLNVDSEGATSD) are enriched in polar residues. A compositionally biased stretch (low complexity) spans 2413–2429 (SLDSIDSCSTVSSVSSS). The span at 2436–2448 (RTHKLSLRSKSPS) shows a compositional bias: basic residues. Residues 2497-2506 (RHREQKKDPE) show a composition bias toward basic and acidic residues.

This sequence belongs to the TRAFAC class myosin-kinesin ATPase superfamily. Myosin family.

Its subcellular location is the membrane. The protein resides in the cytoplasm. It localises to the synapse. The protein localises to the cell projection. It is found in the growth cone. In terms of biological role, myosins are actin-based motor molecules with ATPase activity. Unconventional myosins serve in intracellular movements. Regulates Rho by stimulating it's GTPase activity in neurons. Required for the regulation of neurite branching and motor neuron axon guidance. The polypeptide is Unconventional myosin-IXAa (myo9aa) (Danio rerio (Zebrafish)).